A 97-amino-acid polypeptide reads, in one-letter code: UPF0235 protein PFL_5841 (97 aa).

Belongs to the UPF0235 family.

This Pseudomonas fluorescens (strain ATCC BAA-477 / NRRL B-23932 / Pf-5) protein is UPF0235 protein PFL_5841.